An 84-amino-acid polypeptide reads, in one-letter code: Small ribosomal subunit protein eS27 (84 aa).

Over residues 1–16 the composition is skewed to basic and acidic residues; it reads MPLAKDLLHPSPEEEK. The segment at 1 to 23 is disordered; it reads MPLAKDLLHPSPEEEKRKHKKKR. Ser11 is subject to Phosphoserine. The C4-type zinc-finger motif lies at 38–60; the sequence is PGCYKITTVFSHAQTVVLCVGCS.

This sequence belongs to the eukaryotic ribosomal protein eS27 family. In terms of assembly, component of the small ribosomal subunit. Part of the small subunit (SSU) processome, composed of more than 70 proteins and the RNA chaperone small nucleolar RNA (snoRNA) U3. Requires Zn(2+) as cofactor.

It is found in the cytoplasm. It localises to the nucleus. Its subcellular location is the nucleolus. Functionally, component of the small ribosomal subunit. The ribosome is a large ribonucleoprotein complex responsible for the synthesis of proteins in the cell. Required for proper rRNA processing and maturation of 18S rRNAs. Part of the small subunit (SSU) processome, first precursor of the small eukaryotic ribosomal subunit. During the assembly of the SSU processome in the nucleolus, many ribosome biogenesis factors, an RNA chaperone and ribosomal proteins associate with the nascent pre-rRNA and work in concert to generate RNA folding, modifications, rearrangements and cleavage as well as targeted degradation of pre-ribosomal RNA by the RNA exosome. This Mus musculus (Mouse) protein is Small ribosomal subunit protein eS27.